Consider the following 255-residue polypeptide: Post-GPI attachment to proteins factor 2 (255 aa).

6 consecutive transmembrane segments (helical) span residues 25–45, 80–100, 111–131, 143–163, 185–205, and 209–229; these read LAALSLPLGGFFFCVVWSLLF, LAIFLHLPLRLAVAKIYLEYY, LGILACFLNVVEDLALFCLSF, NAFVVFIACSECYMLMSYLLN, LFLVNVLAFGLAGYCFVRHNA, and AGVYTFFALFEYIVVLTNMGF.

This sequence belongs to the PGAP2 family.

It is found in the golgi apparatus membrane. The protein resides in the endoplasmic reticulum membrane. Functionally, involved in the lipid remodeling steps of GPI-anchor maturation. Required for stable expression of GPI-anchored proteins at the cell surface. This chain is Post-GPI attachment to proteins factor 2, found in Drosophila pseudoobscura pseudoobscura (Fruit fly).